Here is a 130-residue protein sequence, read N- to C-terminus: Protein ApaG (130 aa).

One can recognise an ApaG domain in the interval 3–127 (SQTTRDIEVT…FSLDSPHEKP (125 aa)).

The chain is Protein ApaG from Paramagnetospirillum magneticum (strain ATCC 700264 / AMB-1) (Magnetospirillum magneticum).